The following is a 296-amino-acid chain: Ribosomal RNA small subunit methyltransferase A (296 aa).

S-adenosyl-L-methionine-binding residues include asparagine 32, leucine 34, glycine 59, glutamate 80, aspartate 105, and asparagine 130.

Belongs to the class I-like SAM-binding methyltransferase superfamily. rRNA adenine N(6)-methyltransferase family. RsmA subfamily.

It localises to the cytoplasm. The enzyme catalyses adenosine(1518)/adenosine(1519) in 16S rRNA + 4 S-adenosyl-L-methionine = N(6)-dimethyladenosine(1518)/N(6)-dimethyladenosine(1519) in 16S rRNA + 4 S-adenosyl-L-homocysteine + 4 H(+). In terms of biological role, specifically dimethylates two adjacent adenosines (A1518 and A1519) in the loop of a conserved hairpin near the 3'-end of 16S rRNA in the 30S particle. May play a critical role in biogenesis of 30S subunits. The chain is Ribosomal RNA small subunit methyltransferase A from Levilactobacillus brevis (strain ATCC 367 / BCRC 12310 / CIP 105137 / JCM 1170 / LMG 11437 / NCIMB 947 / NCTC 947) (Lactobacillus brevis).